The sequence spans 156 residues: Transmembrane inner ear expressed protein (156 aa).

The first 27 residues, 1–27 (MAGWPGAGPLCVLGGAALGVCLAGVAG), serve as a signal peptide directing secretion. Topologically, residues 28–57 (QLVEPSTAPPKPKPPPLTKETVVFWDMRLW) are extracellular. The helical transmembrane segment at 58 to 78 (HVVGIFSLFVLSIIITLCCVF) threads the bilayer. The Cytoplasmic segment spans residues 79 to 156 (NCRVPRTRKE…NEAKKKKGEK (78 aa)). A disordered region spans residues 113-135 (NELTEVPGEDKKKKKKKKKDSVD).

Forms the MET channel composed of TMC (TMC1 or TMC2), TMIE, TOMT, CIB (CIB2 or CIB3), LHPL5 and PCDH15. As to expression, expressed in many tissues.

It is found in the membrane. Auxiliary subunit of the mechanotransducer (MET) non-specific cation channel complex located at the tips of stereocilia of cochlear hair cells and that mediates sensory transduction in the auditory system. The MET complex is composed of two dimeric pore-forming ion-conducting transmembrane TMC (TMC1 or TMC2) subunits, and aided by several auxiliary proteins including LHFPL5, TMIE, CIB2/3 and TOMT, and the tip-link PCDH15. May contribute to the formation of the pore. The chain is Transmembrane inner ear expressed protein (TMIE) from Homo sapiens (Human).